A 167-amino-acid polypeptide reads, in one-letter code: Leptin (167 aa).

An N-terminal signal peptide occupies residues 1-21 (MRCGPLCRFLWLWPYLSYIEA). Cysteines 117 and 167 form a disulfide.

Belongs to the leptin family.

The protein localises to the secreted. Its function is as follows. Key player in the regulation of energy balance and body weight control. Once released into the circulation, has central and peripheral effects by binding LEPR, found in many tissues, which results in the activation of several major signaling pathways. In the hypothalamus, acts as an appetite-regulating factor that induces a decrease in food intake and an increase in energy consumption by inducing anorexinogenic factors and suppressing orexigenic neuropeptides, also regulates bone mass and secretion of hypothalamo-pituitary-adrenal hormones. In the periphery, increases basal metabolism, influences reproductive function, regulates pancreatic beta-cell function and insulin secretion, is pro-angiogenic for endothelial cell and affects innate and adaptive immunity. In the arcuate nucleus of the hypothalamus, activates by depolarization POMC neurons inducing FOS and SOCS3 expression to release anorexigenic peptides and inhibits by hyperpolarization NPY neurons inducing SOCS3 with a consequent reduction on release of orexigenic peptides. In addition to its known satiety inducing effect, has a modulatory role in nutrient absorption. In the intestine, reduces glucose absorption by enterocytes by activating PKC and leading to a sequential activation of p38, PI3K and ERK signaling pathways which exerts an inhibitory effect on glucose absorption. Acts as a growth factor on certain tissues, through the activation of different signaling pathways increases expression of genes involved in cell cycle regulation such as CCND1, via JAK2-STAT3 pathway, or VEGFA, via MAPK1/3 and PI3K-AKT1 pathways. May also play an apoptotic role via JAK2-STAT3 pathway and up-regulation of BIRC5 expression. Pro-angiogenic, has mitogenic activity on vascular endothelial cells and plays a role in matrix remodeling by regulating the expression of matrix metalloproteinases (MMPs) and tissue inhibitors of metalloproteinases (TIMPs). In innate immunity, modulates the activity and function of neutrophils by increasing chemotaxis and the secretion of oxygen radicals. Increases phagocytosis by macrophages and enhances secretion of pro-inflammatory mediators. Increases cytotoxic ability of NK cells. Plays a pro-inflammatory role, in synergy with IL1B, by inducing NOS2 which promotes the production of IL6, IL8 and Prostaglandin E2, through a signaling pathway that involves JAK2, PI3K, MAP2K1/MEK1 and MAPK14/p38. In adaptive immunity, promotes the switch of memory T-cells towards T helper-1 cell immune responses. Increases CD4(+)CD25(-) T-cell proliferation and reduces autophagy during TCR (T-cell receptor) stimulation, through MTOR signaling pathway activation and BCL2 up-regulation. The chain is Leptin (LEP) from Ursus thibetanus (Asiatic black bear).